A 280-amino-acid polypeptide reads, in one-letter code: Energy-coupling factor transporter ATP-binding protein EcfA1 (280 aa).

The ABC transporter domain maps to 6 to 241 (LRTENISFQY…SHMLQEIGLD (236 aa)). Position 40 to 47 (40 to 47 (GQNGSGKS)) interacts with ATP.

It belongs to the ABC transporter superfamily. Energy-coupling factor EcfA family. In terms of assembly, forms a stable energy-coupling factor (ECF) transporter complex composed of 2 membrane-embedded substrate-binding proteins (S component), 2 ATP-binding proteins (A component) and 2 transmembrane proteins (T component).

Its subcellular location is the cell membrane. Its function is as follows. ATP-binding (A) component of a common energy-coupling factor (ECF) ABC-transporter complex. Unlike classic ABC transporters this ECF transporter provides the energy necessary to transport a number of different substrates. The protein is Energy-coupling factor transporter ATP-binding protein EcfA1 of Bacillus thuringiensis subsp. konkukian (strain 97-27).